A 418-amino-acid polypeptide reads, in one-letter code: Transcription termination factor Rho (418 aa).

The Rho RNA-BD domain maps to 48 to 123 (SIFGEGTLEV…VKVDKVNGEA (76 aa)). ATP contacts are provided by residues 169-174 (GKGQRA), 181-186 (KSGKTV), and Arg-212.

It belongs to the Rho family. As to quaternary structure, homohexamer. The homohexamer assembles into an open ring structure.

In terms of biological role, facilitates transcription termination by a mechanism that involves Rho binding to the nascent RNA, activation of Rho's RNA-dependent ATPase activity, and release of the mRNA from the DNA template. The sequence is that of Transcription termination factor Rho from Chromobacterium violaceum (strain ATCC 12472 / DSM 30191 / JCM 1249 / CCUG 213 / NBRC 12614 / NCIMB 9131 / NCTC 9757 / MK).